The following is a 388-amino-acid chain: Succinate--CoA ligase [ADP-forming] subunit beta (388 aa).

In terms of domain architecture, ATP-grasp spans 9-244 (KELFRTYGIP…TDEEDPLEVE (236 aa)). Residues K46, 53 to 55 (GRG), E99, V102, and E107 each bind ATP. Positions 199 and 213 each coordinate Mg(2+). Residues N264 and 321–323 (GIL) contribute to the substrate site.

This sequence belongs to the succinate/malate CoA ligase beta subunit family. Heterotetramer of two alpha and two beta subunits. Mg(2+) serves as cofactor.

The enzyme catalyses succinate + ATP + CoA = succinyl-CoA + ADP + phosphate. It catalyses the reaction GTP + succinate + CoA = succinyl-CoA + GDP + phosphate. It functions in the pathway carbohydrate metabolism; tricarboxylic acid cycle; succinate from succinyl-CoA (ligase route): step 1/1. Functionally, succinyl-CoA synthetase functions in the citric acid cycle (TCA), coupling the hydrolysis of succinyl-CoA to the synthesis of either ATP or GTP and thus represents the only step of substrate-level phosphorylation in the TCA. The beta subunit provides nucleotide specificity of the enzyme and binds the substrate succinate, while the binding sites for coenzyme A and phosphate are found in the alpha subunit. This chain is Succinate--CoA ligase [ADP-forming] subunit beta, found in Desulfosudis oleivorans (strain DSM 6200 / JCM 39069 / Hxd3) (Desulfococcus oleovorans).